Reading from the N-terminus, the 639-residue chain is Chaperone protein DnaK (639 aa).

Thr-198 is modified (phosphothreonine; by autocatalysis). Residues 603-618 (AKAQTQGGAQEGAAKQ) show a composition bias toward low complexity. Positions 603 to 639 (AKAQTQGGAQEGAAKQSNATADDVVDAEFEEVKDDKK) are disordered. Over residues 625 to 639 (DVVDAEFEEVKDDKK) the composition is skewed to acidic residues.

It belongs to the heat shock protein 70 family.

In terms of biological role, acts as a chaperone. This Shewanella sp. (strain MR-4) protein is Chaperone protein DnaK.